The following is a 182-amino-acid chain: Large ribosomal subunit protein uL6 (182 aa).

It belongs to the universal ribosomal protein uL6 family. As to quaternary structure, part of the 50S ribosomal subunit.

Its function is as follows. This protein binds to the 23S rRNA, and is important in its secondary structure. It is located near the subunit interface in the base of the L7/L12 stalk, and near the tRNA binding site of the peptidyltransferase center. The chain is Large ribosomal subunit protein uL6 from Karelsulcia muelleri (strain GWSS) (Sulcia muelleri).